A 124-amino-acid chain; its full sequence is Putative iron-sulfur cluster insertion protein ErpA (124 aa).

C49, C113, and C115 together coordinate iron-sulfur cluster.

It belongs to the HesB/IscA family. As to quaternary structure, homodimer. Iron-sulfur cluster serves as cofactor.

Required for insertion of 4Fe-4S clusters. The polypeptide is Putative iron-sulfur cluster insertion protein ErpA (Acidovorax sp. (strain JS42)).